A 404-amino-acid chain; its full sequence is Cysteine desulfurase IscS (404 aa).

Pyridoxal 5'-phosphate is bound by residues 73 to 74 (AT), Asn-153, Gln-181, and 201 to 203 (SAH). Position 204 is an N6-(pyridoxal phosphate)lysine (Lys-204). Pyridoxal 5'-phosphate is bound at residue Thr-241. Catalysis depends on Cys-327, which acts as the Cysteine persulfide intermediate. Residue Cys-327 participates in [2Fe-2S] cluster binding.

This sequence belongs to the class-V pyridoxal-phosphate-dependent aminotransferase family. NifS/IscS subfamily. As to quaternary structure, homodimer. Forms a heterotetramer with IscU, interacts with other sulfur acceptors. Pyridoxal 5'-phosphate serves as cofactor.

It localises to the cytoplasm. The enzyme catalyses (sulfur carrier)-H + L-cysteine = (sulfur carrier)-SH + L-alanine. The protein operates within cofactor biosynthesis; iron-sulfur cluster biosynthesis. Master enzyme that delivers sulfur to a number of partners involved in Fe-S cluster assembly, tRNA modification or cofactor biosynthesis. Catalyzes the removal of elemental sulfur atoms from cysteine to produce alanine. Functions as a sulfur delivery protein for Fe-S cluster synthesis onto IscU, an Fe-S scaffold assembly protein, as well as other S acceptor proteins. The protein is Cysteine desulfurase IscS of Anaeromyxobacter dehalogenans (strain 2CP-C).